Here is a 487-residue protein sequence, read N- to C-terminus: Probable cytosol aminopeptidase (487 aa).

Mn(2+) contacts are provided by Lys253 and Asp258. Residue Lys265 is part of the active site. Mn(2+) is bound by residues Asp277, Asp337, and Glu339. Arg341 is a catalytic residue.

The protein belongs to the peptidase M17 family. The cofactor is Mn(2+).

Its subcellular location is the cytoplasm. The catalysed reaction is Release of an N-terminal amino acid, Xaa-|-Yaa-, in which Xaa is preferably Leu, but may be other amino acids including Pro although not Arg or Lys, and Yaa may be Pro. Amino acid amides and methyl esters are also readily hydrolyzed, but rates on arylamides are exceedingly low.. The enzyme catalyses Release of an N-terminal amino acid, preferentially leucine, but not glutamic or aspartic acids.. Functionally, presumably involved in the processing and regular turnover of intracellular proteins. Catalyzes the removal of unsubstituted N-terminal amino acids from various peptides. This is Probable cytosol aminopeptidase from Parasynechococcus marenigrum (strain WH8102).